The sequence spans 391 residues: Tryptophan synthase beta chain (391 aa).

Lysine 84 carries the post-translational modification N6-(pyridoxal phosphate)lysine.

This sequence belongs to the TrpB family. In terms of assembly, tetramer of two alpha and two beta chains. The cofactor is pyridoxal 5'-phosphate.

The enzyme catalyses (1S,2R)-1-C-(indol-3-yl)glycerol 3-phosphate + L-serine = D-glyceraldehyde 3-phosphate + L-tryptophan + H2O. Its pathway is amino-acid biosynthesis; L-tryptophan biosynthesis; L-tryptophan from chorismate: step 5/5. The beta subunit is responsible for the synthesis of L-tryptophan from indole and L-serine. This chain is Tryptophan synthase beta chain, found in Caldanaerobacter subterraneus subsp. tengcongensis (strain DSM 15242 / JCM 11007 / NBRC 100824 / MB4) (Thermoanaerobacter tengcongensis).